A 78-amino-acid polypeptide reads, in one-letter code: Acyl carrier protein (78 aa).

A Carrier domain is found at 4-78 (AEIKDKVYDI…QQAIDYIVKK (75 aa)). O-(pantetheine 4'-phosphoryl)serine is present on serine 39.

The protein belongs to the acyl carrier protein (ACP) family. 4'-phosphopantetheine is transferred from CoA to a specific serine of apo-ACP by AcpS. This modification is essential for activity because fatty acids are bound in thioester linkage to the sulfhydryl of the prosthetic group.

The protein resides in the cytoplasm. Its pathway is lipid metabolism; fatty acid biosynthesis. Carrier of the growing fatty acid chain in fatty acid biosynthesis. In Chlorobium limicola (strain DSM 245 / NBRC 103803 / 6330), this protein is Acyl carrier protein.